Consider the following 386-residue polypeptide: Succinate--CoA ligase [ADP-forming] subunit beta (386 aa).

In terms of domain architecture, ATP-grasp spans 9–244; the sequence is KEILRKYGVS…LDEEDPKEIE (236 aa). ATP-binding positions include K46, 53–55, E99, C102, and E107; that span reads GRG. Mg(2+)-binding residues include N199 and D213. Substrate is bound by residues N264 and 321–323; that span reads GIM.

It belongs to the succinate/malate CoA ligase beta subunit family. As to quaternary structure, heterotetramer of two alpha and two beta subunits. It depends on Mg(2+) as a cofactor.

It carries out the reaction succinate + ATP + CoA = succinyl-CoA + ADP + phosphate. It catalyses the reaction GTP + succinate + CoA = succinyl-CoA + GDP + phosphate. The protein operates within carbohydrate metabolism; tricarboxylic acid cycle; succinate from succinyl-CoA (ligase route): step 1/1. Succinyl-CoA synthetase functions in the citric acid cycle (TCA), coupling the hydrolysis of succinyl-CoA to the synthesis of either ATP or GTP and thus represents the only step of substrate-level phosphorylation in the TCA. The beta subunit provides nucleotide specificity of the enzyme and binds the substrate succinate, while the binding sites for coenzyme A and phosphate are found in the alpha subunit. This chain is Succinate--CoA ligase [ADP-forming] subunit beta, found in Bacillus pumilus (strain SAFR-032).